Consider the following 355-residue polypeptide: Zinc finger protein CONSTANS-LIKE 1 (355 aa).

Cysteine 12, cysteine 15, cysteine 35, histidine 40, cysteine 55, cysteine 58, cysteine 78, and histidine 83 together coordinate Zn(2+). The B box-type 1; atypical zinc finger occupies 12–54 (CDTCRSAACTVYCRADSAYLCSSCDAQVHAANRLASRHERVRV). A B box-type 2; atypical zinc finger spans residues 55-97 (CQSCERAPAAFFCKADAASLCTTCDSEIHSANPLARRHQRVPI). Over residues 252 to 264 (ESTTSDATVSNPR) the composition is skewed to polar residues. The disordered stretch occupies residues 252–281 (ESTTSDATVSNPRSPKAVTDQPPYPPAQML). The CCT domain occupies 286–328 (REARVLRYREKKKMRKFEKTIRYASRKAYAEKRPRIKGRFAKK).

The protein belongs to the CONSTANS family. In terms of tissue distribution, highly expressed in leaves and at lower levels in stems, flowers and siliques. Not detected in roots.

It localises to the nucleus. Putative transcription factor that may be involved in the light input to the circadian clock but does not affect flowering time. The protein is Zinc finger protein CONSTANS-LIKE 1 (COL1) of Arabidopsis thaliana (Mouse-ear cress).